A 396-amino-acid polypeptide reads, in one-letter code: L-lactate dehydrogenase (396 aa).

The 380-residue stretch at M1–G380 folds into the FMN hydroxy acid dehydrogenase domain. Residue Y24 coordinates substrate. FMN-binding residues include S106 and Q127. Y129 provides a ligand contact to substrate. T155 is an FMN binding site. R164 is a binding site for substrate. Position 251 (K251) interacts with FMN. Catalysis depends on H275, which acts as the Proton acceptor. R278 contacts substrate. Position 306–330 (D306–R330) interacts with FMN.

The protein belongs to the FMN-dependent alpha-hydroxy acid dehydrogenase family. Requires FMN as cofactor.

It localises to the cell inner membrane. It carries out the reaction (S)-lactate + A = pyruvate + AH2. In terms of biological role, catalyzes the conversion of L-lactate to pyruvate. Is coupled to the respiratory chain. The polypeptide is L-lactate dehydrogenase (Shigella flexneri serotype 5b (strain 8401)).